Consider the following 505-residue polypeptide: Trans-cinnamate 4-monooxygenase (505 aa).

The chain crosses the membrane as a helical span at residues 3-23 (LLLIEKTLVALFAAIIGAILI). Residues 213-218 (RSRLAQ) and A306 contribute to the (E)-cinnamate site. C447 is a binding site for heme.

This sequence belongs to the cytochrome P450 family. It depends on heme as a cofactor.

It is found in the membrane. The catalysed reaction is (E)-cinnamate + reduced [NADPH--hemoprotein reductase] + O2 = (E)-4-coumarate + oxidized [NADPH--hemoprotein reductase] + H2O + H(+). Its pathway is phenylpropanoid metabolism; trans-4-coumarate biosynthesis; trans-4-coumarate from trans-cinnamate: step 1/1. With respect to regulation, inactivated by piperonylic acid. Catalyzes the first oxidative step of the phenylpropanoid pathway in higher plants by transforming trans-cinnamate into p-coumarate. The compounds formed by this pathway are essential components for lignification, pollination, and defense against ultraviolet light, predators and pathogens. Can also use 2-naphthoic acid as substrate. The chain is Trans-cinnamate 4-monooxygenase from Helianthus tuberosus (Jerusalem artichoke).